Consider the following 209-residue polypeptide: Claudin-like protein ZF-A9 (209 aa).

4 helical membrane passes run 8–28 (LGTTLGTLGWLGIIISCAIPL), 81–101 (AILVISAIVGLIAMFASFAGG), 114–134 (ALVATTGGVAFIIAGILGLVP), and 159–179 (FGAAIFICWGAAVLLVIGGGL). The segment at 187–209 (GRTSSRGRYTPASQNGRERSEYV) is disordered. Residues 188–201 (RTSSRGRYTPASQN) are compositionally biased toward polar residues.

It belongs to the claudin family.

It is found in the cell membrane. Its subcellular location is the cell junction. It localises to the tight junction. Component of tight junction (TJ) strands. In Danio rerio (Zebrafish), this protein is Claudin-like protein ZF-A9 (cldng).